A 168-amino-acid polypeptide reads, in one-letter code: Microtubule-associated protein Jupiter (168 aa).

The segment covering 1–14 (MISNFDCTDNQASS) has biased composition (polar residues). The tract at residues 1–33 (MISNFDCTDNQASSKVLRPPGGGSSDIFGSEMP) is disordered. At serine 24 the chain carries Phosphoserine. Threonine 35 bears the Phosphothreonine mark. Residues 76–87 (RGQKTVDSHSRL) are compositionally biased toward basic and acidic residues. Disordered regions lie at residues 76 to 106 (RGQK…KSSI) and 124 to 168 (NGHY…GAGK). Phosphothreonine occurs at positions 92 and 96. Phosphoserine occurs at positions 105, 133, and 144. Low complexity predominate over residues 131–144 (SGSVSSASSSVSSS). Residues 145–155 (TENLKMNSGSR) are compositionally biased toward polar residues.

Belongs to the MAP Jupiter family.

The protein localises to the nucleus. Its subcellular location is the cytoplasm. It localises to the cytoskeleton. The protein resides in the spindle. Its function is as follows. Binds to all microtubule populations. This Drosophila simulans (Fruit fly) protein is Microtubule-associated protein Jupiter.